The primary structure comprises 2524 residues: Neurogenic locus notch homolog protein 1 (2524 aa).

The first 19 residues, 1-19 (MDRIGLAVLLCSLPVLTQG), serve as a signal peptide directing secretion. 4 consecutive EGF-like domains span residues 20–57 (LRCT…ERCQ), 58–99 (FPNP…KVCL), 102–140 (VDNA…DSCQ), and 141–177 (QADP…ATCK). The Extracellular segment spans residues 20–1729 (LRCTQTAEMC…METPKPSTLY (1710 aa)). 33 disulfides stabilise this stretch: Cys22-Cys35, Cys29-Cys45, Cys47-Cys56, Cys62-Cys74, Cys68-Cys87, Cys89-Cys98, Cys106-Cys117, Cys111-Cys128, Cys130-Cys139, Cys145-Cys156, Cys150-Cys165, Cys167-Cys176, Cys183-Cys194, Cys188-Cys203, Cys205-Cys214, Cys221-Cys232, Cys226-Cys242, Cys244-Cys253, Cys260-Cys271, Cys265-Cys280, Cys282-Cys291, Cys298-Cys311, Cys305-Cys320, Cys322-Cys331, Cys338-Cys349, Cys343-Cys358, Cys360-Cys369, Cys375-Cys386, Cys380-Cys397, Cys399-Cys408, Cys415-Cys428, Cys422-Cys437, and Cys439-Cys448. An EGF-like 5; calcium-binding domain is found at 179-215 (DINECSQNPCKNGGQCINEFGSYRCTCQNRFTGRNCD). The region spanning 217–254 (PYVPCNPSPCLNGGTCRQTDDTSYDCTCLPGFSGQNCE) is the EGF-like 6 domain. Thr231 is a glycosylation site (O-linked (Fuc...) threonine; alternate). Thr231 carries O-linked (GalNAc...) threonine; alternate glycosylation. Positions 256-292 (NIDDCPSNNCRNGGTCVDGVNTYNCQCPPDWTGQYCT) constitute an EGF-like 7; calcium-binding domain. The 39-residue stretch at 294–332 (DVDECQLMPNACQNGGTCHNTYGGYNCVCVNGWTGEDCS) folds into the EGF-like 8; calcium-binding domain. In terms of domain architecture, EGF-like 9; calcium-binding spans 334 to 370 (NIDDCANAACHSGATCHDRVASFYCECPHGRTGLLCH). The EGF-like 10 domain occupies 371–409 (LDNACISNPCNEGSNCDTNPVNGKAICTCPPGYTGPACN). The EGF-like 11; calcium-binding domain occupies 411–449 (DVDECSLGANPCEHGGRCTNTLGSFQCNCPQGYAGPRCE). Ca(2+) contacts are provided by Thr431 and Ser434. Ser434 carries O-linked (Glc...) serine glycosylation. The Ca(2+) site is built by Asp451, Val452, and Glu454. Residues 451 to 487 (DVNECLSNPCQNDSTCLDQIGEFQCICMPGYEGLYCE) enclose the EGF-like 12; calcium-binding domain. Disulfide bonds link Cys455–Cys466, Cys460–Cys475, and Cys477–Cys486. O-linked (Glc...) serine glycosylation occurs at Ser457. Asn462 carries N-linked (GlcNAc...) asparagine glycosylation. O-linked (Fuc...) threonine glycosylation occurs at Thr465. 2 residues coordinate Ca(2+): Asp468 and Gln469. Positions 489, 490, and 492 each coordinate Ca(2+). In terms of domain architecture, EGF-like 13; calcium-binding spans 489–525 (NIDECASNPCLHNGKCIDKINEFRCDCPTGFSGNLCQ). Intrachain disulfides connect Cys493–Cys504, Cys498–Cys513, Cys515–Cys524, Cys531–Cys542, Cys536–Cys551, Cys553–Cys562, Cys569–Cys579, Cys574–Cys588, Cys590–Cys599, Cys606–Cys617, Cys611–Cys626, Cys628–Cys637, Cys644–Cys654, Cys649–Cys663, Cys665–Cys674, Cys681–Cys692, Cys686–Cys701, Cys703–Cys712, Cys719–Cys729, Cys724–Cys738, Cys740–Cys749, Cys756–Cys767, Cys761–Cys776, Cys778–Cys787, Cys794–Cys805, Cys799–Cys814, Cys816–Cys825, Cys832–Cys843, Cys837–Cys854, Cys856–Cys865, Cys872–Cys883, Cys877–Cys892, Cys894–Cys903, Cys910–Cys921, Cys915–Cys930, Cys932–Cys941, Cys948–Cys959, Cys953–Cys968, Cys970–Cys979, Cys986–Cys997, Cys991–Cys1006, Cys1008–Cys1017, Cys1024–Cys1035, Cys1029–Cys1044, Cys1046–Cys1055, Cys1062–Cys1073, Cys1067–Cys1082, Cys1084–Cys1093, Cys1100–Cys1121, Cys1115–Cys1130, Cys1132–Cys1141, Cys1148–Cys1159, Cys1153–Cys1168, Cys1170–Cys1179, Cys1186–Cys1197, Cys1191–Cys1206, Cys1208–Cys1217, Cys1224–Cys1243, Cys1237–Cys1252, Cys1254–Cys1263, Cys1270–Cys1283, Cys1275–Cys1292, Cys1294–Cys1303, Cys1310–Cys1321, Cys1315–Cys1333, Cys1335–Cys1344, Cys1351–Cys1362, Cys1356–Cys1371, Cys1373–Cys1382, Cys1390–Cys1401, Cys1395–Cys1412, Cys1414–Cys1423, Cys1447–Cys1470, Cys1452–Cys1465, and Cys1461–Cys1477. Ser495 carries an O-linked (Glc...) serine glycan. The Ca(2+) site is built by Asp506 and Lys507. The region spanning 527 to 563 (DFDECTSTPCKNGAKCLDGPNSYTCQCTEGFTGRHCE) is the EGF-like 14; calcium-binding domain. Residues 565-600 (DINECIPDPCHYGTCKDGIATFTCLCRPGYTGRLCD) form the EGF-like 15; calcium-binding domain. An EGF-like 16; calcium-binding domain is found at 602 to 638 (DINECLSKPCLNGGQCTDRENGYICTCPKGTTGVNCE). The 36-residue stretch at 640–675 (KIDDCASNLCDNGKCIDKIDGYECTCEPGYTGKLCN) folds into the EGF-like 17 domain. The EGF-like 18; calcium-binding domain maps to 677–713 (NINECDSNPCRNGGTCKDQINGFTCVCPDGYHDHMCL). The region spanning 715-750 (EVNECNSNPCIHGACHDGVNGYKCDCEAGWSGSNCD) is the EGF-like 19; calcium-binding domain. The 37-residue stretch at 752-788 (NNNECESNPCMNGGTCKDMTGAYICTCKAGFSGPNCQ) folds into the EGF-like 20; calcium-binding domain. Residues 790-826 (NINECSSNPCLNHGTCIDDVAGYKCNCMLPYTGAICE) enclose the EGF-like 21; calcium-binding domain. In terms of domain architecture, EGF-like 22 spans 828 to 866 (VLAPCAGSPCKNGGRCKESEDFETFSCECPPGWQGQTCE). In terms of domain architecture, EGF-like 23; calcium-binding spans 868–904 (DMNECVNRPCRNGATCQNTNGSYKCNCKPGYTGRNCE). Residue Asn887 is glycosylated (N-linked (GlcNAc...) asparagine). An EGF-like 24; calcium-binding domain is found at 906–942 (DIDDCQPNPCHNGGSCSDGINMFFCNCPAGFRGPKCE). Positions 944 to 980 (DINECASNPCKNGANCTDCVNSYTCTCQPGFSGIHCE) constitute an EGF-like 25; calcium-binding domain. Residue Asn958 is glycosylated (N-linked (GlcNAc...) asparagine). Residues 982–1018 (NTPDCTESSCFNGGTCIDGINTFTCQCPPGFTGSYCQ) enclose the EGF-like 26 domain. The EGF-like 27; calcium-binding domain maps to 1020–1056 (DINECDSKPCLNGGTCQDSYGTYKCTCPQGYTGLNCQ). EGF-like domains lie at 1058–1094 (LVRW…VYCD) and 1096–1142 (PSVS…SYCE). The EGF-like 30; calcium-binding domain maps to 1144–1180 (QVDECSPNPCQNGATCTDYLGGYSCECVAGYHGVNCS). Asn1178 carries an N-linked (GlcNAc...) asparagine glycan. The region spanning 1182–1218 (EINECLSHPCQNGGTCIDLINTYKCSCPRGTQGVHCE) is the EGF-like 31; calcium-binding domain. In terms of domain architecture, EGF-like 32; calcium-binding spans 1220–1264 (NVDDCTPFYDSFTLEPKCFNNGKCIDRVGGYNCICPPGFVGERCE). EGF-like domains are found at residues 1266–1304 (DVNE…RRCE), 1306–1346 (VVDG…TCEY), 1347–1383 (DSRT…ATCQ), and 1386–1424 (VISP…LFCH). Residue Thr1400 is glycosylated (O-linked (Fuc...) threonine; alternate). A glycan (O-linked (GalNAc...) threonine; alternate) is linked at Thr1400. LNR repeat units follow at residues 1447 to 1487 (CENE…PWKN), 1488 to 1529 (CTQS…CNPL), and 1530 to 1564 (YDQY…NMPE). The N-linked (GlcNAc...) asparagine glycan is linked to Asn1487. Disulfide bonds link Cys1488/Cys1512, Cys1494/Cys1507, Cys1503/Cys1519, Cys1534/Cys1547, and Cys1543/Cys1559. Residue Asn1508 is glycosylated (N-linked (GlcNAc...) asparagine). N-linked (GlcNAc...) asparagine glycosylation is present at Asn1584. The chain crosses the membrane as a helical span at residues 1730–1750 (PMLSMLVIPLLIIFVFMMVIV). The Cytoplasmic portion of the chain corresponds to 1751–2524 (NKKRRREHGQ…QRTHIPEAFK (774 aa)). ANK repeat units follow at residues 1876–1919 (DGFT…QLHN), 1924–1953 (TGET…DANV), 1957–1987 (MGRT…DLDA), 1991–2020 (DGTT…DVNA), 2024–2053 (FGKS…NKDM), and 2057–2086 (KEET…NRDI). Disordered regions lie at residues 2144–2230 (NMKP…LNHL), 2369–2407 (MQAQ…FCSS), and 2451–2524 (LTPP…EAFK). 2 stretches are compositionally biased toward polar residues: residues 2180-2192 (GKTT…SSGV) and 2208-2230 (DVSS…LNHL). Positions 2369–2394 (MQAQQMQQQQNLQLHQSMQQQHHNSS) are enriched in low complexity. Polar residues-rich tracts occupy residues 2395 to 2407 (TTST…FCSS) and 2451 to 2471 (LTPP…SHQL). The span at 2481–2496 (PSPESPDQWSSSSPHS) shows a compositional bias: low complexity. Residues 2497–2516 (NMSDWSEGISSPPTSMQPQR) show a composition bias toward polar residues.

The protein belongs to the NOTCH family. Forms a ternary complex with nrarp and rbpj/suh. Post-translationally, O-glycosylated on the EGF-like domains. Contains both O-linked fucose and O-linked glucose. O-linked glycosylation by galnt11 is involved in determination of left/right symmetry: glycosylation promotes activation of notch1, possibly by promoting cleavage by adam17, modulating the balance between motile and immotile (sensory) cilia at the left-right organiser (LRO). In terms of processing, synthesized in the endoplasmic reticulum as an inactive form which is proteolytically cleaved by a furin-like convertase in the trans-Golgi network before it reaches the plasma membrane to yield an active, ligand-accessible form. Cleavage results in a C-terminal fragment N(TM) and a N-terminal fragment N(EC). Following ligand binding, it is cleaved by adam17 to yield a membrane-associated intermediate fragment called notch extracellular truncation (NEXT). Following endocytosis, this fragment is then cleaved by presenilin dependent gamma-secretase to release a Notch-derived peptide containing the intracellular domain (NICD) from the membrane.

The protein resides in the cell membrane. It is found in the nucleus. Functions as a receptor for membrane-bound ligands Jagged-1 (JAG1), Jagged-2 (JAG2) and Delta-1 (DLL1) to regulate cell-fate determination. Upon ligand activation through the released notch intracellular domain (NICD) it forms a transcriptional activator complex with RBPJ/RBPSUH and activates genes of the enhancer of split locus. Affects the implementation of differentiation, proliferation and apoptotic programs. Involved in angiogenesis; negatively regulates endothelial cell proliferation and migration and angiogenic sprouting. Involved in the maturation of both CD4(+) and CD8(+) cells in the thymus. Important for follicular differentiation and possibly cell fate selection within the follicle. During cerebellar development, functions as a receptor for neuronal DNER and is involved in the differentiation of Bergmann glia. Represses neuronal and myogenic differentiation. May play an essential role in postimplantation development, probably in some aspect of cell specification and/or differentiation. May be involved in mesoderm development, somite formation and neurogenesis. Involved in determination of left/right symmetry by modulating the balance between motile and immotile (sensory) cilia at the left-right organiser (LRO). The sequence is that of Neurogenic locus notch homolog protein 1 (notch1) from Xenopus laevis (African clawed frog).